The primary structure comprises 566 residues: Bifunctional NADP phosphatase/NAD kinase (566 aa).

The NADP phosphatase stretch occupies residues 1–283 (MDMLEMALNI…KLVGIFGNRW (283 aa)). Residues Glu-66, Asp-85, Val-87, Asp-88, and Asp-229 each coordinate Mg(2+). Residues 275 to 566 (LVGIFGNRWR…YNKLKKLSLM (292 aa)) form an NAD kinase region. Asp-355 (proton acceptor) is an active-site residue. Residues 355–356 (DG), Arg-360, 430–431 (NE), Lys-441, Arg-458, Asp-460, 471–476 (TAYSLS), and Asn-528 contribute to the NAD(+) site.

It in the N-terminal section; belongs to the inositol monophosphatase superfamily. The protein in the C-terminal section; belongs to the NAD kinase family. In terms of assembly, homotetramer. The cofactor is Mg(2+).

Its subcellular location is the cytoplasm. The catalysed reaction is NAD(+) + ATP = ADP + NADP(+) + H(+). It catalyses the reaction NADP(+) + H2O = phosphate + NAD(+). Its function is as follows. Involved in the regulation of the intracellular balance between NAD(H) and NADP(H), and is a key enzyme in the biosynthesis of NADP. Catalyzes the phosphorylation and dephosphorylation of NAD and NADP, respectively. Although it shows conflicting dual activities and is able to supply NADP, it seems that its physiological role is to prevent excess accumulation of NADP. This is Bifunctional NADP phosphatase/NAD kinase from Methanococcus maripaludis (strain DSM 14266 / JCM 13030 / NBRC 101832 / S2 / LL).